The primary structure comprises 124 residues: U13-hexatoxin-Mg1a (124 aa).

The N-terminal stretch at 1 to 17 (MKLSALVFVASVMLVAA) is a signal peptide. Residues 18-52 (SPVKDVEEPVETHLAADLKTIEELAKYEEAAVQKR) constitute a propeptide that is removed on maturation. Disulfide bonds link C54-C72, C65-C78, C69-C116, and C71-C87.

As to expression, expressed by the venom gland.

It is found in the secreted. Functionally, no toxicity is observed upon intracranial injection into mice and intrathorax injection into crickets. The sequence is that of U13-hexatoxin-Mg1a from Macrothele gigas (Japanese funnel web spider).